The chain runs to 263 residues: Acyl-[acyl-carrier-protein]--UDP-N-acetylglucosamine O-acyltransferase (263 aa).

Belongs to the transferase hexapeptide repeat family. LpxA subfamily. In terms of assembly, homotrimer.

It localises to the cytoplasm. The catalysed reaction is a (3R)-hydroxyacyl-[ACP] + UDP-N-acetyl-alpha-D-glucosamine = a UDP-3-O-[(3R)-3-hydroxyacyl]-N-acetyl-alpha-D-glucosamine + holo-[ACP]. It functions in the pathway glycolipid biosynthesis; lipid IV(A) biosynthesis; lipid IV(A) from (3R)-3-hydroxytetradecanoyl-[acyl-carrier-protein] and UDP-N-acetyl-alpha-D-glucosamine: step 1/6. Its function is as follows. Involved in the biosynthesis of lipid A, a phosphorylated glycolipid that anchors the lipopolysaccharide to the outer membrane of the cell. The chain is Acyl-[acyl-carrier-protein]--UDP-N-acetylglucosamine O-acyltransferase from Campylobacter jejuni subsp. jejuni serotype O:2 (strain ATCC 700819 / NCTC 11168).